The following is a 305-amino-acid chain: D-alanine--D-alanine ligase (305 aa).

In terms of domain architecture, ATP-grasp spans 105-300 (KMIWQAAGIN…FDELVVQILE (196 aa)). 131–186 (ADRLGLPLIIKPAREGSTLGLNKVDNEQDFRSAYQAAAEYDSLVLAEQFIQGIELT) is an ATP binding site. Residues Asp254, Glu267, and Asn269 each contribute to the Mg(2+) site.

This sequence belongs to the D-alanine--D-alanine ligase family. Mg(2+) is required as a cofactor. The cofactor is Mn(2+).

It is found in the cytoplasm. It catalyses the reaction 2 D-alanine + ATP = D-alanyl-D-alanine + ADP + phosphate + H(+). The protein operates within cell wall biogenesis; peptidoglycan biosynthesis. In terms of biological role, cell wall formation. This chain is D-alanine--D-alanine ligase, found in Nitrosomonas europaea (strain ATCC 19718 / CIP 103999 / KCTC 2705 / NBRC 14298).